The sequence spans 363 residues: Spermidine/putrescine import ATP-binding protein PotA (363 aa).

Positions 6–236 constitute an ABC transporter domain; the sequence is LEIRNVTRRF…PRSRFVADFI (231 aa). 38–45 serves as a coordination point for ATP; the sequence is GPSGCGKT.

This sequence belongs to the ABC transporter superfamily. Spermidine/putrescine importer (TC 3.A.1.11.1) family. As to quaternary structure, the complex is composed of two ATP-binding proteins (PotA), two transmembrane proteins (PotB and PotC) and a solute-binding protein (PotD).

The protein localises to the cell inner membrane. It catalyses the reaction ATP + H2O + polyamine-[polyamine-binding protein]Side 1 = ADP + phosphate + polyamineSide 2 + [polyamine-binding protein]Side 1.. In terms of biological role, part of the ABC transporter complex PotABCD involved in spermidine/putrescine import. Responsible for energy coupling to the transport system. This chain is Spermidine/putrescine import ATP-binding protein PotA, found in Pseudomonas aeruginosa (strain UCBPP-PA14).